A 466-amino-acid chain; its full sequence is Zinc metalloproteinase/disintegrin (466 aa).

The first 6 residues, 1–6, serve as a signal peptide directing secretion; that stretch reads FPYQGS. The propeptide occupies 7–174; the sequence is SIILESGNVN…PIKKASQLIV (168 aa). In terms of domain architecture, Peptidase M12B spans 180-377; it reads RYMEIVIVVD…ENPPCILNKP (198 aa). Ca(2+) contacts are provided by glutamate 183 and aspartate 267. Cystine bridges form between cysteine 291–cysteine 372, cysteine 331–cysteine 356, and cysteine 333–cysteine 339. Residue histidine 316 participates in Zn(2+) binding. Glutamate 317 is an active-site residue. Zn(2+) contacts are provided by histidine 320 and histidine 326. Positions 372 and 375 each coordinate Ca(2+). A propeptide spanning residues 377–401 is cleaved from the precursor; that stretch reads PLRTDTVSTPVSGNELLEAGKDYDR. The 82-residue stretch at 385-466 folds into the Disintegrin domain; sequence TPVSGNELLE…GDCPRNPYHA (82 aa). Intrachain disulfides connect cysteine 422–cysteine 428, cysteine 427–cysteine 452, and cysteine 440–cysteine 459. The Cell attachment site signature appears at 444–446; sequence RGD.

The protein belongs to the venom metalloproteinase (M12B) family. P-II subfamily. P-IIa sub-subfamily. Monomer. It depends on Zn(2+) as a cofactor. As to expression, expressed by the venom gland.

It localises to the secreted. Functionally, impairs hemostasis in the envenomed animal. Its function is as follows. Inhibits platelet aggregation induced by ADP, thrombin, platelet-activating factor and collagen. Acts by inhibiting fibrinogen interaction with platelet receptors GPIIb/GPIIIa (ITGA2B/ITGB3). This is Zinc metalloproteinase/disintegrin from Deinagkistrodon acutus (Hundred-pace snake).